The primary structure comprises 464 residues: tRNA-2-methylthio-N(6)-dimethylallyladenosine synthase (464 aa).

The region spanning 19–135 (GSYWITTFGC…LENLLGKVDL (117 aa)) is the MTTase N-terminal domain. Residues Cys28, Cys64, Cys98, Cys170, Cys174, and Cys177 each contribute to the [4Fe-4S] cluster site. One can recognise a Radical SAM core domain in the interval 156 to 394 (RESSICGWVN…DLVEKTARSR (239 aa)). Residues 396–464 (KRYINNIESV…PFSLTGELYL (69 aa)) form the TRAM domain.

The protein belongs to the methylthiotransferase family. MiaB subfamily. Monomer. [4Fe-4S] cluster is required as a cofactor.

It localises to the cytoplasm. It carries out the reaction N(6)-dimethylallyladenosine(37) in tRNA + (sulfur carrier)-SH + AH2 + 2 S-adenosyl-L-methionine = 2-methylsulfanyl-N(6)-dimethylallyladenosine(37) in tRNA + (sulfur carrier)-H + 5'-deoxyadenosine + L-methionine + A + S-adenosyl-L-homocysteine + 2 H(+). Its function is as follows. Catalyzes the methylthiolation of N6-(dimethylallyl)adenosine (i(6)A), leading to the formation of 2-methylthio-N6-(dimethylallyl)adenosine (ms(2)i(6)A) at position 37 in tRNAs that read codons beginning with uridine. In Prochlorococcus marinus (strain AS9601), this protein is tRNA-2-methylthio-N(6)-dimethylallyladenosine synthase.